The following is a 549-amino-acid chain: Oxygen-dependent choline dehydrogenase (549 aa).

Asp4 to Glu33 lines the FAD pocket. His465 acts as the Proton acceptor in catalysis.

Belongs to the GMC oxidoreductase family. FAD is required as a cofactor.

The enzyme catalyses choline + A = betaine aldehyde + AH2. It carries out the reaction betaine aldehyde + NAD(+) + H2O = glycine betaine + NADH + 2 H(+). Its pathway is amine and polyamine biosynthesis; betaine biosynthesis via choline pathway; betaine aldehyde from choline (cytochrome c reductase route): step 1/1. Involved in the biosynthesis of the osmoprotectant glycine betaine. Catalyzes the oxidation of choline to betaine aldehyde and betaine aldehyde to glycine betaine at the same rate. The protein is Oxygen-dependent choline dehydrogenase of Sinorhizobium fredii (strain NBRC 101917 / NGR234).